Consider the following 155-residue polypeptide: Large ribosomal subunit protein uL30 (155 aa).

The protein belongs to the universal ribosomal protein uL30 family. As to quaternary structure, part of the 50S ribosomal subunit.

In Pyrococcus furiosus (strain ATCC 43587 / DSM 3638 / JCM 8422 / Vc1), this protein is Large ribosomal subunit protein uL30.